Consider the following 483-residue polypeptide: NADH-quinone oxidoreductase subunit N (483 aa).

The next 13 membrane-spanning stretches (helical) occupy residues 11–31, 37–57, 82–100, 110–130, 164–184, 205–225, 239–259, 268–288, 301–321, 329–349, 372–392, 406–426, and 446–466; these read ALPEIIILCMAMFVLLLDLFL, SLIYIFTQLGLAAAAVVTACT, LMMYLTTSVMLVYTRQYVS, FALTLFALLGMMIMVSGQHFL, FVLGALSSGMLLYGMSMLYGV, AVLVLGVVFLIAGLGFKLGAV, PTAVTLFIGSVTKLAAFAFMI, VLAIDWQGMLAIMAVLSILIG, MLAYSTISHVGYLLYGFMSAG, MFYIMAYVLMTLGGFGIMLLL, YAFLMLIIMFSMAGVPPTLGF, GFVGLVIFAVVMAAIGGFYYL, and PIDMKVLLSLNALLLLALGMF.

This sequence belongs to the complex I subunit 2 family. NDH-1 is composed of 14 different subunits. Subunits NuoA, H, J, K, L, M, N constitute the membrane sector of the complex.

The protein localises to the cell inner membrane. The enzyme catalyses a quinone + NADH + 5 H(+)(in) = a quinol + NAD(+) + 4 H(+)(out). NDH-1 shuttles electrons from NADH, via FMN and iron-sulfur (Fe-S) centers, to quinones in the respiratory chain. The immediate electron acceptor for the enzyme in this species is believed to be ubiquinone. Couples the redox reaction to proton translocation (for every two electrons transferred, four hydrogen ions are translocated across the cytoplasmic membrane), and thus conserves the redox energy in a proton gradient. The protein is NADH-quinone oxidoreductase subunit N of Methylovorus glucosotrophus (strain SIP3-4).